A 310-amino-acid polypeptide reads, in one-letter code: Probable cell division protein WhiA (310 aa).

Residues 277–310 (SLKELAEQVPDGPISKSGVNHRLKKLHEIAENLR) constitute a DNA-binding region (H-T-H motif).

The protein belongs to the WhiA family.

Involved in cell division and chromosome segregation. The chain is Probable cell division protein WhiA from Lactobacillus delbrueckii subsp. bulgaricus (strain ATCC BAA-365 / Lb-18).